Here is a 145-residue protein sequence, read N- to C-terminus: Mini-ribonuclease 3 (145 aa).

D27 is an active-site residue.

It belongs to the MrnC RNase family. In terms of assembly, homodimer. The cofactor is Mg(2+).

It is found in the cytoplasm. Its function is as follows. Involved in correct processing of both the 5' and 3' ends of 23S rRNA precursor. Processes 30S rRNA precursor transcript even in absence of ribonuclease 3 (Rnc); Rnc processes 30S rRNA into smaller rRNA precursors. The protein is Mini-ribonuclease 3 of Kosmotoga olearia (strain ATCC BAA-1733 / DSM 21960 / TBF 19.5.1).